The sequence spans 221 residues: Immediate early response gene 2 protein (221 aa).

Position 1 is an N-acetylmethionine (methionine 1). The segment at 54–156 (THQPEFPPSR…EGEATSEVSN (103 aa)) is disordered. Residues 64–77 (RALDPRLHPPREPE) show a composition bias toward basic and acidic residues. The span at 125-136 (SDLSDGSDAGLV) shows a compositional bias: low complexity.

The protein belongs to the IER family.

The protein resides in the cytoplasm. It is found in the nucleus. Functionally, DNA-binding protein that seems to act as a transcription factor. Involved in the regulation of neuronal differentiation, acts upon JNK-signaling pathway activation and plays a role in neurite outgrowth in hippocampal cells. May mediate with FIBP FGF-signaling in the establishment of laterality in the embryo. Promotes cell motility, seems to stimulate tumor metastasis. The protein is Immediate early response gene 2 protein (Ier2) of Rattus norvegicus (Rat).